We begin with the raw amino-acid sequence, 180 residues long: Meiotic recombination protein rec15 (180 aa).

In terms of assembly, homomer. Interacts (via C-terminus) with hop1 (via C-terminus); the interaction is direct. Interacts (via C-terminus) with rec10; the interaction is direct. Interacts with mde2; the interaction is direct.

The protein localises to the nucleus. Its subcellular location is the chromosome. Its function is as follows. Required during the early stages of meiosis for meiotic recombination. In Schizosaccharomyces pombe (strain 972 / ATCC 24843) (Fission yeast), this protein is Meiotic recombination protein rec15.